Here is a 102-residue protein sequence, read N- to C-terminus: NADH-quinone oxidoreductase subunit K (102 aa).

The next 3 membrane-spanning stretches (helical) occupy residues 5–25, 31–51, and 66–86; these read LEHY…GIFV, IVIL…MVAF, and FVLT…VVFF.

This sequence belongs to the complex I subunit 4L family. In terms of assembly, NDH-1 is composed of 14 different subunits. Subunits NuoA, H, J, K, L, M, N constitute the membrane sector of the complex.

The protein resides in the cellular chromatophore membrane. The enzyme catalyses a quinone + NADH + 5 H(+)(in) = a quinol + NAD(+) + 4 H(+)(out). Functionally, NDH-1 shuttles electrons from NADH, via FMN and iron-sulfur (Fe-S) centers, to quinones in the respiratory chain. The immediate electron acceptor for the enzyme in this species is believed to be ubiquinone. Couples the redox reaction to proton translocation (for every two electrons transferred, four hydrogen ions are translocated across the cytoplasmic membrane), and thus conserves the redox energy in a proton gradient. This is NADH-quinone oxidoreductase subunit K from Rhodobacter capsulatus (Rhodopseudomonas capsulata).